Consider the following 395-residue polypeptide: NAD(P)H-quinone oxidoreductase subunit H, chloroplastic (395 aa).

This sequence belongs to the complex I 49 kDa subunit family. In terms of assembly, NDH is composed of at least 16 different subunits, 5 of which are encoded in the nucleus.

Its subcellular location is the plastid. It is found in the chloroplast thylakoid membrane. The catalysed reaction is a plastoquinone + NADH + (n+1) H(+)(in) = a plastoquinol + NAD(+) + n H(+)(out). The enzyme catalyses a plastoquinone + NADPH + (n+1) H(+)(in) = a plastoquinol + NADP(+) + n H(+)(out). Functionally, NDH shuttles electrons from NAD(P)H:plastoquinone, via FMN and iron-sulfur (Fe-S) centers, to quinones in the photosynthetic chain and possibly in a chloroplast respiratory chain. The immediate electron acceptor for the enzyme in this species is believed to be plastoquinone. Couples the redox reaction to proton translocation, and thus conserves the redox energy in a proton gradient. The sequence is that of NAD(P)H-quinone oxidoreductase subunit H, chloroplastic from Coffea arabica (Arabian coffee).